The sequence spans 117 residues: Large ribosomal subunit protein uL18 (117 aa).

Belongs to the universal ribosomal protein uL18 family. As to quaternary structure, part of the 50S ribosomal subunit; part of the 5S rRNA/L5/L18/L25 subcomplex. Contacts the 5S and 23S rRNAs.

Functionally, this is one of the proteins that bind and probably mediate the attachment of the 5S RNA into the large ribosomal subunit, where it forms part of the central protuberance. This is Large ribosomal subunit protein uL18 from Polynucleobacter necessarius subsp. necessarius (strain STIR1).